A 156-amino-acid polypeptide reads, in one-letter code: Transcription antitermination protein NusB (156 aa).

It belongs to the NusB family.

Functionally, involved in transcription antitermination. Required for transcription of ribosomal RNA (rRNA) genes. Binds specifically to the boxA antiterminator sequence of the ribosomal RNA (rrn) operons. This Rickettsia rickettsii (strain Iowa) protein is Transcription antitermination protein NusB.